The primary structure comprises 1355 residues: Phosphoribosylformylglycinamidine synthase (1355 aa).

ATP contacts are provided by residues 326 to 337 (GAETGTGGRLRD) and 406 to 408 (IGF). Residues glutamate 743, asparagine 747, and aspartate 911 each contribute to the Mg(2+) site. ATP is bound at residue serine 913. The Glutamine amidotransferase type-1 domain occupies 1087-1325 (KVAVIREEGS…LSWQWPFMPE (239 aa)). Cysteine 1182 (nucleophile) is an active-site residue. Active-site residues include histidine 1310 and glutamate 1312.

The protein in the N-terminal section; belongs to the FGAMS family.

The protein localises to the cytoplasm. It carries out the reaction N(2)-formyl-N(1)-(5-phospho-beta-D-ribosyl)glycinamide + L-glutamine + ATP + H2O = 2-formamido-N(1)-(5-O-phospho-beta-D-ribosyl)acetamidine + L-glutamate + ADP + phosphate + H(+). Its pathway is purine metabolism; IMP biosynthesis via de novo pathway; 5-amino-1-(5-phospho-D-ribosyl)imidazole from N(2)-formyl-N(1)-(5-phospho-D-ribosyl)glycinamide: step 1/2. Phosphoribosylformylglycinamidine synthase involved in the purines biosynthetic pathway. Catalyzes the ATP-dependent conversion of formylglycinamide ribonucleotide (FGAR) and glutamine to yield formylglycinamidine ribonucleotide (FGAM) and glutamate. This is Phosphoribosylformylglycinamidine synthase (purL) from Dictyostelium discoideum (Social amoeba).